A 294-amino-acid chain; its full sequence is MHNIFKGLITALITPFKDNKLDLYALERIVKHQIKHEVDAVLIAGSTGESSSLSFEEYKLLLQTSVEIVNKCIPIISGCSSNNTTYARALAAESTKIGVDGFMASPPSYVKPTQHGIYKHFEALHEVCNLPIMLYSAPTRSGVDFSDETILRLSKLPRILALKDCGVDLERPLRIRATVKKDFNILTGNDEVVLAFNAQGGVGWTSVASNIVPNICKELLEKWNKNDTKGALEIHQKLLPLYTALFVESNPIPIKYAAHYLGLCENEIRPPLTEASDSAKKQIENIITSLSIKI.

Position 47 (T47) interacts with pyruvate. Y135 serves as the catalytic Proton donor/acceptor. K163 serves as the catalytic Schiff-base intermediate with substrate. T205 lines the pyruvate pocket.

The protein belongs to the DapA family. Homotetramer; dimer of dimers.

It localises to the cytoplasm. It carries out the reaction L-aspartate 4-semialdehyde + pyruvate = (2S,4S)-4-hydroxy-2,3,4,5-tetrahydrodipicolinate + H2O + H(+). Its pathway is amino-acid biosynthesis; L-lysine biosynthesis via DAP pathway; (S)-tetrahydrodipicolinate from L-aspartate: step 3/4. Its function is as follows. Catalyzes the condensation of (S)-aspartate-beta-semialdehyde [(S)-ASA] and pyruvate to 4-hydroxy-tetrahydrodipicolinate (HTPA). The protein is 4-hydroxy-tetrahydrodipicolinate synthase of Rickettsia africae (strain ESF-5).